Reading from the N-terminus, the 196-residue chain is MTKVHPKFPSTCEESLCDSKAAVVLTVWKKSLLFNCDGFTVYNANGELVFRVDNYMNCPRDNIVLMDASGFPLLSIRRKKLSLGDCWMVYDGETERDPIFTARKNVSIISNRKSLAWVSAKKTVLYEIEGSYGQRSCKILDERRNKKKTAEIKRKETVIGGVAFGKDVYKLIVESEMEPRVAMALTIILDQMFRSS.

This sequence belongs to the LOR family.

Might be related to the phospholipid scramblase and tubby-like superfamily of membrane tethered transcription factors. This chain is Protein LURP-one-related 8, found in Arabidopsis thaliana (Mouse-ear cress).